The primary structure comprises 599 residues: rRNA (cytosine-C(5))-methyltransferase NOP2C (599 aa).

In terms of domain architecture, PUA spans 158–265; sequence PKEVLVSRKC…IAVDLNHRVF (108 aa). S-adenosyl-L-methionine contacts are provided by residues 304-310, aspartate 328, and aspartate 355; that span reads CAAPGGK. Residues 372-454 are disordered; that stretch reads LINGDNSSSM…GGRAGKSQGF (83 aa). The span at 378–388 shows a compositional bias: low complexity; sequence SSSMTSHSELS. The segment covering 399–412 has biased composition (basic and acidic residues); it reads RRSEADKSCEKNDS. Over residues 413-424 the composition is skewed to polar residues; that stretch reads TEQPNGGDNVSQ. The span at 428–438 shows a compositional bias: basic residues; the sequence is RKNKGRLKNGR. Aspartate 465 contributes to the S-adenosyl-L-methionine binding site. The Nucleophile role is filled by cysteine 516.

It belongs to the class I-like SAM-binding methyltransferase superfamily. RsmB/NOP family.

Its subcellular location is the nucleus. It is found in the nucleolus. It catalyses the reaction a cytidine in rRNA + S-adenosyl-L-methionine = a 5-methylcytidine in rRNA + S-adenosyl-L-homocysteine + H(+). Its function is as follows. Involved in ribosomal large subunit assembly. S-adenosyl-L-methionine-dependent methyltransferase that may methylates the C(5) position of cytosine in rRNA. May play a role in the regulation of the cell cycle and the increased nucleolar activity that is associated with the cell proliferation. Seems involved in the regulation of cell proliferation. The polypeptide is rRNA (cytosine-C(5))-methyltransferase NOP2C (Arabidopsis thaliana (Mouse-ear cress)).